The primary structure comprises 811 residues: Beta-catenin homolog sys-1 (811 aa).

Residues 1–105 are disordered; it reads MHSTGEPQRG…SRGPAAPAQN (105 aa). Over residues 64–103 the composition is skewed to low complexity; the sequence is QQQQMTPQALSTQQQQQVQQQQQRQLYSSPSPSRGPAAPA.

Interacts with TCF transcription factor pop-1 (via N-terminal region); interaction is direct.

Its subcellular location is the nucleus. The protein localises to the cytoplasm. The protein resides in the cytoplasmic granule. It is found in the cytoskeleton. It localises to the microtubule organizing center. Its subcellular location is the centrosome. The protein localises to the chromosome. The protein resides in the centromere. It is found in the kinetochore. In terms of biological role, transcription coregulator. Part of the Wnt signaling asymmetry pathway, probably acting downstream of putative frizzled ligand mom-2, Wnt/frizzled receptors lin-17 and mom-5, and dishevelled homolog dsh-2. Activates or represses target gene expression, depending on upstream Wnt signals and interactions with transcription factors, such as pop-1. Required for the activation of Wnt-responsive genes in the E blastomere; thereby leading to a role in endoderm specification and gut development. Reciprocal distribution patterns of sys-1 and pop-1/TCF in the daughters of anterior-posterior cell divisions functions in specifying cell fate; a higher sys-1 to pop-1 ratio promotes the posterior cell fate, whereas a low sys-1 to pop-1 ratio promotes the anterior fate. Represses expression of homeobox ttx-3 in neuroblasts of the SIAD/SIBV lineage, perhaps acting by blocking its transcriptional activation by a complex consisting of ref-2 and pop-1. Required for early organization of the hermaphrodite, but not the male, gonad; involved in generation of regulatory cells, known as the distal tip cells (DTC), and in formation of the somatic gonadal primordium. Involved in regulating asymmetric divisions of the somatic gonadal precursor cells (SGP), Z1 and Z4. The chain is Beta-catenin homolog sys-1 from Caenorhabditis elegans.